The primary structure comprises 785 residues: MGRLRLAFLAISLVVFVCVSEEIFSRGGLNLLRFSVYGEDVAEQTWIHQNPRRKLISYPKKFSVSAPNLAFGPAPSFAPGPGPSFAPGPAPNPRSYDWLAPASSPNEPPAETPDESSPSPSEETPSVVAPSQSVPGPPRPPPQREKKDDILMKLIIAVASTAVLTFVFVALMFLCCFKRNCNNAVGSRDGPRDEGPLLRLSTGSTENSPTVASTSRKMFSVASSKKRSFLSRVSLKRNGHEFSTAESSSAAGLPPLKLPPGRSAPPPPPAAAPPPQPPPPPPPKPQPPPPPKIARPPPAPPKGAAPKRQGNTSSGDASDVDSETGAPKTKLKPFFWDKMANPDQKMVWHEISAGSFQFNEEAMESLFGYNDGNKNKNGQKSTDSSLRESPLQYIQIIDTRKAQNLSILLRALNVTTEEVVDAIKEGNELPVELLQTLLKMAPTSEEELKLRLYSGDLHLLGPAERFLKILVDIPFAFKRIESLLFMISLQEEVSGLKEALGTLEVACKKLRNSRLFLKLLEAVLKTGNRMNVGTFRGDAQAFKLDTLLKLSDVKGTDGKTTLLHFVVLEIIRSEGVRALRLQSRSFSSVKTDDSNADSSPQSVERYRSTGLQVVTGLTTELEDVKRAAIIDADGLAATLANISGSLTNAREFLKTMDEESDFERALAGFIERADADFKWLKEEEERIMVLVKSSADYFHGKSAKNEGLRLFAIVRDFLIMLEKVCREVKETTKTTNHSGKKESEMTTSDSNQPSPDFRQRLFPAIAERRMDSSDDSDDEEDSSPS.

The signal sequence occupies residues 1–20; that stretch reads MGRLRLAFLAISLVVFVCVS. Residues 96 to 145 form a disordered region; sequence YDWLAPASSPNEPPAETPDESSPSPSEETPSVVAPSQSVPGPPRPPPQRE. Residues 115–134 show a composition bias toward low complexity; the sequence is ESSPSPSEETPSVVAPSQSV. A helical transmembrane segment spans residues 154–174; it reads LIIAVASTAVLTFVFVALMFL. Disordered regions lie at residues 184 to 228, 241 to 329, and 730 to 785; these read AVGS…KKRS, EFST…APKT, and ETTK…SSPS. Polar residues predominate over residues 201 to 223; sequence STGSTENSPTVASTSRKMFSVAS. The segment covering 256–303 has biased composition (pro residues); the sequence is LKLPPGRSAPPPPPAAAPPPQPPPPPPPKPQPPPPPKIARPPPAPPKG. Positions 321-747 constitute an FH2 domain; it reads DSETGAPKTK…SGKKESEMTT (427 aa). A compositionally biased stretch (polar residues) spans 745–754; sequence MTTSDSNQPS. The segment covering 773-785 has biased composition (acidic residues); the sequence is SDDSDDEEDSSPS.

This sequence belongs to the formin-like family. Class-I subfamily.

The protein resides in the membrane. Its function is as follows. Acts as actin nucleation factor that directs the formation of actin cables and polarized growth in pollen tubes. The polypeptide is Formin-like protein 3 (FH3) (Arabidopsis thaliana (Mouse-ear cress)).